The primary structure comprises 93 residues: uncharacterized protein (93 aa).

This is an uncharacterized protein from Saimiriine herpesvirus 2 (strain 11) (SaHV-2).